Here is a 736-residue protein sequence, read N- to C-terminus: 1,4-alpha-glucan branching enzyme GlgB (736 aa).

D415 serves as the catalytic Nucleophile. The active-site Proton donor is E470.

Belongs to the glycosyl hydrolase 13 family. GlgB subfamily. Monomer.

It catalyses the reaction Transfers a segment of a (1-&gt;4)-alpha-D-glucan chain to a primary hydroxy group in a similar glucan chain.. The protein operates within glycan biosynthesis; glycogen biosynthesis. Catalyzes the formation of the alpha-1,6-glucosidic linkages in glycogen by scission of a 1,4-alpha-linked oligosaccharide from growing alpha-1,4-glucan chains and the subsequent attachment of the oligosaccharide to the alpha-1,6 position. The sequence is that of 1,4-alpha-glucan branching enzyme GlgB from Burkholderia cenocepacia (strain HI2424).